A 205-amino-acid polypeptide reads, in one-letter code: Holliday junction branch migration complex subunit RuvA (205 aa).

Residues 1 to 64 form a domain I region; that stretch reads MIGRLRGIIL…EDAQLLYGFN (64 aa). Positions 65 to 143 are domain II; the sequence is DKQERALFRE…GLNGDLFNNT (79 aa). Residues 144-156 are flexible linker; it reads GDIQLPASNSSQI. Positions 157 to 205 are domain III; sequence SDADIEAEAASALVALGYKPQEASRLVSKIAKPGADCETLIRDALRAAL.

The protein belongs to the RuvA family. As to quaternary structure, homotetramer. Forms an RuvA(8)-RuvB(12)-Holliday junction (HJ) complex. HJ DNA is sandwiched between 2 RuvA tetramers; dsDNA enters through RuvA and exits via RuvB. An RuvB hexamer assembles on each DNA strand where it exits the tetramer. Each RuvB hexamer is contacted by two RuvA subunits (via domain III) on 2 adjacent RuvB subunits; this complex drives branch migration. In the full resolvosome a probable DNA-RuvA(4)-RuvB(12)-RuvC(2) complex forms which resolves the HJ.

It localises to the cytoplasm. Functionally, the RuvA-RuvB-RuvC complex processes Holliday junction (HJ) DNA during genetic recombination and DNA repair, while the RuvA-RuvB complex plays an important role in the rescue of blocked DNA replication forks via replication fork reversal (RFR). RuvA specifically binds to HJ cruciform DNA, conferring on it an open structure. The RuvB hexamer acts as an ATP-dependent pump, pulling dsDNA into and through the RuvAB complex. HJ branch migration allows RuvC to scan DNA until it finds its consensus sequence, where it cleaves and resolves the cruciform DNA. This Yersinia enterocolitica serotype O:8 / biotype 1B (strain NCTC 13174 / 8081) protein is Holliday junction branch migration complex subunit RuvA.